The chain runs to 421 residues: Serine--tRNA ligase (421 aa).

An L-serine-binding site is contributed by 230–232 (TAE). 259-261 (RRE) provides a ligand contact to ATP. Residue Glu282 participates in L-serine binding. 346–349 (EISS) lines the ATP pocket. Ser381 contributes to the L-serine binding site.

It belongs to the class-II aminoacyl-tRNA synthetase family. Type-1 seryl-tRNA synthetase subfamily. As to quaternary structure, homodimer. The tRNA molecule binds across the dimer.

The protein resides in the cytoplasm. It carries out the reaction tRNA(Ser) + L-serine + ATP = L-seryl-tRNA(Ser) + AMP + diphosphate + H(+). The catalysed reaction is tRNA(Sec) + L-serine + ATP = L-seryl-tRNA(Sec) + AMP + diphosphate + H(+). It participates in aminoacyl-tRNA biosynthesis; selenocysteinyl-tRNA(Sec) biosynthesis; L-seryl-tRNA(Sec) from L-serine and tRNA(Sec): step 1/1. Catalyzes the attachment of serine to tRNA(Ser). Is also able to aminoacylate tRNA(Sec) with serine, to form the misacylated tRNA L-seryl-tRNA(Sec), which will be further converted into selenocysteinyl-tRNA(Sec). The protein is Serine--tRNA ligase of Acidithiobacillus ferrooxidans (strain ATCC 23270 / DSM 14882 / CIP 104768 / NCIMB 8455) (Ferrobacillus ferrooxidans (strain ATCC 23270)).